Consider the following 212-residue polypeptide: Large ribosomal subunit protein uL4 (212 aa).

Positions 45–71 (RQGNASTKTRAEVRGGGRKPWRQKGTG) are disordered. Residues 60–71 (GGRKPWRQKGTG) are compositionally biased toward basic residues.

Belongs to the universal ribosomal protein uL4 family. Part of the 50S ribosomal subunit.

One of the primary rRNA binding proteins, this protein initially binds near the 5'-end of the 23S rRNA. It is important during the early stages of 50S assembly. It makes multiple contacts with different domains of the 23S rRNA in the assembled 50S subunit and ribosome. Functionally, forms part of the polypeptide exit tunnel. The protein is Large ribosomal subunit protein uL4 of Nostoc punctiforme (strain ATCC 29133 / PCC 73102).